Reading from the N-terminus, the 620-residue chain is Glutathione-regulated potassium-efflux system protein KefC (620 aa).

Residues 1–3 (MDS) lie on the Periplasmic side of the membrane. The helical transmembrane segment at 4 to 24 (HTLLQALIYLGSAALIVPIAV) threads the bilayer. Position 25 (Arg-25) is a topological domain, cytoplasmic. A helical membrane pass occupies residues 26–46 (LGLGSVLGYLIAGCIIGPWGL). Residues 47–53 (RLVTDAE) are Periplasmic-facing. Residues 54–74 (SILHFAEIGVVLMLFVIGLEL) traverse the membrane as a helical segment. Over 75-89 (DPQRLWKLRASVFGG) the chain is Cytoplasmic. A helical membrane pass occupies residues 90-110 (GALQMVVCGGLIGLFCMFLGL). Over 111–113 (RWQ) the chain is Periplasmic. The chain crosses the membrane as a helical span at residues 114–134 (VAELIGMTLALSSTAIAMQAM). The Cytoplasmic segment spans residues 135 to 148 (NERNLTVSQVGRSA). The helical transmembrane segment at 149–169 (FAVLLFQDIAAIPLVAMIPLL) threads the bilayer. Residues 170–177 (AASGASTT) lie on the Periplasmic side of the membrane. The chain crosses the membrane as a helical span at residues 178-198 (LGAFALSALKVAGALALVVLL). Over 199-213 (GRYVTRPALRFVARS) the chain is Cytoplasmic. Residues 214-233 (GLREVFSAVALFLVFGFGLL) form a helical membrane-spanning segment. Residues 234-236 (LEE) lie on the Periplasmic side of the membrane. The chain crosses the membrane as a helical span at residues 237–254 (VGLSMAMGAFLAGVLLAS). Residues 255 to 269 (SEYRHALESDIEPFK) are Cytoplasmic-facing. Residues 270-290 (GLLLGLFFIGVGMSIDFGTLV) traverse the membrane as a helical segment. The Periplasmic portion of the chain corresponds to 291–293 (ENP). The helical transmembrane segment at 294 to 314 (LRILLLLAGFLAIKIVMLWLV) threads the bilayer. The Cytoplasmic portion of the chain corresponds to 315–326 (ARTLGVPAKQRR). The helical transmembrane segment at 327–347 (WFAVLLGQGSEFAFVVFGAAQ) threads the bilayer. The Periplasmic segment spans residues 348-358 (MADVLEPEWAK). Residues 359-379 (ALTLAVALSMAATPIFLVLLT) form a helical membrane-spanning segment. Residues 380-620 (RMEKTATGEA…ADEPEVKPSI (241 aa)) lie on the Cytoplasmic side of the membrane. The RCK N-terminal domain occupies 399–518 (QPRVIVAGFG…AGVAMPERET (120 aa)). The tract at residues 599–620 (QGTAEGKHSGKAADEPEVKPSI) is disordered. Over residues 603 to 620 (EGKHSGKAADEPEVKPSI) the composition is skewed to basic and acidic residues.

Belongs to the monovalent cation:proton antiporter 2 (CPA2) transporter (TC 2.A.37) family. KefC subfamily. As to quaternary structure, homodimer. Interacts with the regulatory subunit KefF.

The protein localises to the cell inner membrane. In terms of biological role, pore-forming subunit of a potassium efflux system that confers protection against electrophiles. Catalyzes K(+)/H(+) antiport. The sequence is that of Glutathione-regulated potassium-efflux system protein KefC from Salmonella typhi.